Here is a 401-residue protein sequence, read N- to C-terminus: Probable 2,3-bisphosphoglycerate-independent phosphoglycerate mutase (401 aa).

Belongs to the BPG-independent phosphoglycerate mutase family. A-PGAM subfamily.

It carries out the reaction (2R)-2-phosphoglycerate = (2R)-3-phosphoglycerate. It participates in carbohydrate degradation; glycolysis; pyruvate from D-glyceraldehyde 3-phosphate: step 3/5. Functionally, catalyzes the interconversion of 2-phosphoglycerate and 3-phosphoglycerate. The chain is Probable 2,3-bisphosphoglycerate-independent phosphoglycerate mutase from Thermotoga sp. (strain RQ2).